Consider the following 285-residue polypeptide: Ribosomal RNA small subunit methyltransferase I (285 aa).

Belongs to the methyltransferase superfamily. RsmI family.

It is found in the cytoplasm. The catalysed reaction is cytidine(1402) in 16S rRNA + S-adenosyl-L-methionine = 2'-O-methylcytidine(1402) in 16S rRNA + S-adenosyl-L-homocysteine + H(+). Catalyzes the 2'-O-methylation of the ribose of cytidine 1402 (C1402) in 16S rRNA. In Buchnera aphidicola subsp. Schizaphis graminum (strain Sg), this protein is Ribosomal RNA small subunit methyltransferase I.